Reading from the N-terminus, the 97-residue chain is Cystatin-A (97 aa).

An N-acetylmethionine modification is found at Met-1. The short motif at 46 to 50 is the Secondary area of contact element; it reads QVVAG.

The protein belongs to the cystatin family.

It is found in the cytoplasm. Functionally, this is an intracellular thiol proteinase inhibitor. This chain is Cystatin-A (Csta), found in Mus musculus (Mouse).